We begin with the raw amino-acid sequence, 731 residues long: Replication restart protein PriA (731 aa).

A 3'BD region spans residues 1 to 98 (MSVAHVALPV…HPIGDVLFHA (98 aa)). The WH stretch occupies residues 115–177 (WYWFATEQGQ…RGKGLAELAC (63 aa)). Residues 200-375 (TEQATAVGAI…VRQGKYRQLT (176 aa)) form a helicase lobe 1 region. Residues 210 to 376 (HSAADRFSAW…RQGKYRQLTL (167 aa)) form the Helicase ATP-binding domain. Residue 223-230 (GITGSGKT) participates in ATP binding. ADP contacts are provided by glycine 226, glycine 228, lysine 229, threonine 230, glutamate 231, and arginine 263. Positions 319-322 (DEEH) match the DEAH box motif. The short motif at 326–340 (YKQQEGWRYHARDLA) is the Aromatic-rich loop (ARL) element. Positions 387–430 (QQHVLDLKGQPLQAGLSPALISRMRQHLQADNQVILFLNRRGFA) are helicase lobe 2, N-terminus. The CRR stretch occupies residues 431 to 485 (PALLCHDCGWIAECPRCDSYYTLHQAQHHLRCHHCDSQRPIPRQCPSCGSTHLVP). Cysteine 435, cysteine 438, cysteine 444, cysteine 447, cysteine 462, cysteine 465, cysteine 475, and cysteine 478 together coordinate Zn(2+). One can recognise a Helicase C-terminal domain in the interval 470 to 637 (PIPRQCPSCG…QLPPWTSHVL (168 aa)). The tract at residues 486-626 (VGIGTEQLEQ…AEQALAERQT (141 aa)) is helicase lobe 2, C-terminus. Lysine 543 provides a ligand contact to ADP. The interval 633–731 (TSHVLIRAED…WVLDVDPIEG (99 aa)) is CTD.

The protein belongs to the helicase family. PriA subfamily. Binds SSB. Component of the replication restart primosome. The cofactor is Zn(2+).

It catalyses the reaction Couples ATP hydrolysis with the unwinding of duplex DNA by translocating in the 3'-5' direction.. The catalysed reaction is ATP + H2O = ADP + phosphate + H(+). ATPase activity is stimulated by single-stranded binding protein (SSB). In terms of biological role, initiates the restart of stalled replication forks, which reloads the replicative helicase on sites other than the origin of replication. Recognizes and binds to abandoned replication forks and remodels them to uncover a helicase loading site. Promotes assembly of the primosome at these replication forks. Its function is as follows. Recognizes abandoned replication forks and remodels SSB on ssDNA to uncover a loading site for DnaB. Binds replication fork DNA, has DNA-dependent ATPase activity in the presence of replication fork DNA, restores normal cell growth and SOS induction to E.coli mutant pirA304. The protein is Replication restart protein PriA of Klebsiella pneumoniae subsp. pneumoniae (strain ATCC 700721 / MGH 78578).